Reading from the N-terminus, the 375-residue chain is Peroxisomal targeting signal 2 receptor (375 aa).

6 WD repeats span residues 58 to 89 (LTQD…RLFD), 102 to 133 (EHER…KIWS), 172 to 203 (KNRN…SLFD), 218 to 249 (HSGL…RIWD), 281 to 312 (AHGL…RIWR), and 340 to 372 (QHSE…FVWN).

The protein belongs to the WD repeat peroxin-7 family. Interacts with PEX21.

The protein localises to the cytoplasm. The protein resides in the cytosol. Its subcellular location is the peroxisome matrix. Its function is as follows. Receptor required for the peroxisomal import of proteins containing a C-terminal PTS2-type peroxisomal targeting signal, such as 3-oxoacyl-CoA thiolase. Specifically binds to cargo proteins containing a PTS2 peroxisomal targeting signal in the cytosol. Cargo protein-binding triggers interaction with PEX21 and formation of a ternary complex composed of PEX21 and PEX7 along with PTS2-containing cargo proteins, which is tranlocated into peroxisomes by passing through the PEX13-PEX14 docking complex. In Saccharomyces cerevisiae (strain ATCC 204508 / S288c) (Baker's yeast), this protein is Peroxisomal targeting signal 2 receptor.